Consider the following 400-residue polypeptide: Enoyl-[acyl-carrier-protein] reductase [NADH] (400 aa).

NAD(+)-binding positions include 48-53 (GASTGY), 74-75 (FE), 111-112 (DA), and 139-140 (LA). Tyrosine 225 contacts substrate. The active-site Proton donor is the tyrosine 235. Residues lysine 244 and 273–275 (VVT) each bind NAD(+).

This sequence belongs to the TER reductase family. In terms of assembly, monomer.

The enzyme catalyses a 2,3-saturated acyl-[ACP] + NAD(+) = a (2E)-enoyl-[ACP] + NADH + H(+). The protein operates within lipid metabolism; fatty acid biosynthesis. Its function is as follows. Involved in the final reduction of the elongation cycle of fatty acid synthesis (FAS II). Catalyzes the reduction of a carbon-carbon double bond in an enoyl moiety that is covalently linked to an acyl carrier protein (ACP). The sequence is that of Enoyl-[acyl-carrier-protein] reductase [NADH] from Burkholderia cenocepacia (strain HI2424).